Here is a 648-residue protein sequence, read N- to C-terminus: Golgin subfamily A member 8G (648 aa).

Residues 1-11 are compositionally biased toward pro residues; the sequence is MWPQARLPPHP. Disordered regions lie at residues 1–84 and 119–139; these read MWPQ…SATL and NKQV…KQKA. Over residues 50–62 the composition is skewed to polar residues; the sequence is TNGSIHETATSGG. Coiled-coil stretches lie at residues 105–160, 223–275, and 318–424; these read VSQL…LNTD, LEQS…MSQE, and EVEL…QQKQ. The segment covering 121-139 has biased composition (basic and acidic residues); the sequence is QVEHQLEEEKKANNEKQKA. Disordered stretches follow at residues 356–376, 434–461, 508–549, and 600–624; these read LREQ…QEER, ALPG…SIPQ, PITK…GVAA, and PVQG…QDHQ. Residues 441-453 show a composition bias toward basic and acidic residues; it reads GGGHLDSEGEEAP. The segment covering 521 to 534 has biased composition (gly residues); that stretch reads PGGGHHQAGPGQGG.

This sequence belongs to the GOLGA8 family.

This is Golgin subfamily A member 8G from Homo sapiens (Human).